A 213-amino-acid chain; its full sequence is MKAFTKITAIVAPLDRSNVDTDAIIPKQFLKSIKRSGFGPNAFDEWRYLDHGEPGMDNSKRPLNPDFSLNQPRYQGAQILLTRKNFGCGSSREHAPWALDDYGFRAVIAPSFADIFFNNCYKNGLLPIVLTEEQVDRLFKEVEANEGYQLSIDLAEQTLTTPSGETFTFDITEHRKHCLLNGLDEIGLTLQHADEIHAFEEKRRQSQPWLFNG.

The protein belongs to the LeuD family. LeuD type 1 subfamily. Heterodimer of LeuC and LeuD.

It catalyses the reaction (2R,3S)-3-isopropylmalate = (2S)-2-isopropylmalate. The protein operates within amino-acid biosynthesis; L-leucine biosynthesis; L-leucine from 3-methyl-2-oxobutanoate: step 2/4. Catalyzes the isomerization between 2-isopropylmalate and 3-isopropylmalate, via the formation of 2-isopropylmaleate. In Neisseria meningitidis serogroup C (strain 053442), this protein is 3-isopropylmalate dehydratase small subunit.